The following is a 714-amino-acid chain: Polyribonucleotide nucleotidyltransferase (714 aa).

2 residues coordinate Mg(2+): aspartate 487 and aspartate 493. Residues 554–613 (PRIETLKIPTDKIREVIGTGGKVIREIVEKTGAKINIEDDGTVKVASSDGNSIKAAIAWI) form the KH domain. The S1 motif domain maps to 623–691 (GQIYEGTVVK…DRGKVRLSMR (69 aa)).

The protein belongs to the polyribonucleotide nucleotidyltransferase family. Mg(2+) is required as a cofactor.

It localises to the cytoplasm. It catalyses the reaction RNA(n+1) + phosphate = RNA(n) + a ribonucleoside 5'-diphosphate. Involved in mRNA degradation. Catalyzes the phosphorolysis of single-stranded polyribonucleotides processively in the 3'- to 5'-direction. This chain is Polyribonucleotide nucleotidyltransferase, found in Methylocella silvestris (strain DSM 15510 / CIP 108128 / LMG 27833 / NCIMB 13906 / BL2).